Consider the following 364-residue polypeptide: MKFVDEAYIDIAAGDGGSGCVSFSHEKYKEFGGPNGGDGGRGGHVYAVADINLNTLVDFRFSRRHEARNGGHGMGSDMFGAKGDDIILKMPVGTILTDAETGEVLFELLVPGEQILIAKGGDGGFGNLRFKSSTNRAPRSKTPGWPGDRKSLKLELKVLADVGLLGMPNAGKSTFISAVSNARPRIADYPFTTLHPNLGVVRVGPEQSFVVADLPGLIEGASEGAGLGHLFLRHLQRTRLLLHIVDLAPFDEGVDPVAQAKAIVGELKKYDEALYKKPRWLVLNKLDMIDADERAAVVKDFVKRFKFKGPVFEISALTREGCEQLVKTIYQHVKKVQKSEQPEEEVDPRFIELPPEPAKPASSD.

One can recognise an Obg domain in the interval 1–159; sequence MKFVDEAYID…KSLKLELKVL (159 aa). Residues 160–334 enclose the OBG-type G domain; that stretch reads ADVGLLGMPN…LVKTIYQHVK (175 aa). GTP-binding positions include 166 to 173, 191 to 195, 213 to 216, 284 to 287, and 315 to 317; these read GMPNAGKS, FTTLH, DLPG, NKLD, and SAL. Mg(2+) contacts are provided by Ser-173 and Thr-193. The interval 337 to 364 is disordered; the sequence is QKSEQPEEEVDPRFIELPPEPAKPASSD.

It belongs to the TRAFAC class OBG-HflX-like GTPase superfamily. OBG GTPase family. As to quaternary structure, monomer. The cofactor is Mg(2+).

The protein resides in the cytoplasm. An essential GTPase which binds GTP, GDP and possibly (p)ppGpp with moderate affinity, with high nucleotide exchange rates and a fairly low GTP hydrolysis rate. Plays a role in control of the cell cycle, stress response, ribosome biogenesis and in those bacteria that undergo differentiation, in morphogenesis control. The polypeptide is GTPase Obg (Polaromonas naphthalenivorans (strain CJ2)).